The following is a 695-amino-acid chain: MAAATIVHDTSEAVELCPAYGLYLKPITKMTISVALPQLKQPGKSISNWEVMERLKGMVQNHQFSTLRISKSTMDFIRFEGEVENKSLVKSFLACLDGKTIKLSGFSDILKVRAAEFKIDFPTRHDWDSFFRDAKDMNETLPGERPDTIHLEGLPCKWFALKESGSEKPSEDVLVKVFEKFGEIRNVDIPMLDPYREEMTGRNFHTFSFGGHLNFEAYVQYREYMGFIQAMSALRGMKLMYKGEDGKAVACNIKVSFDSTKHLSDASIKKRQLERQKLQELEQQREEQKRREKEAEERQRAEERKQKELEELERERKREEKLRKREQKQRDRELRRNQKKLEKLQAEEQKQLQEKIKLEERKLLLAQRNLQSIRLIAELLSRAKAVKLREQEQKEEKLRLQQQEERRRLQEAELRRVEEEKERALGLQRKERELRERLLSILLSKKPDDSHTHDELGVAHADLLQPVLDILQTVSSGCVSATTLHPLGGQPPAGAPKESPAHPEADGAPKSVNGSVAEEAPCKEVQSSCRVVPEDGSPEKRCPGGVLSCIPDNNQQPKGIPACEQNVSRKDTRSEQDKCNREPSKGRGRATGDGLADRHKRERSRARRASSREDGRPRKERRPHKKHAYKDDSPRRRSTSPDHTRSRRSHSKDRHRRERSRERRGSASRKHSRHRRRSERSRSRSPSRHRSTWNR.

The segment at 83–112 (VENKSLVKSFLACLDGKTIKLSGFSDILKV) is PKA-RI and PKA-RII subunit binding domain. Lys118 participates in a covalent cross-link: Glycyl lysine isopeptide (Lys-Gly) (interchain with G-Cter in SUMO1); alternate. Lys118 participates in a covalent cross-link: Glycyl lysine isopeptide (Lys-Gly) (interchain with G-Cter in SUMO2); alternate. Residues 147–256 (DTIHLEGLPC…KAVACNIKVS (110 aa)) form the RRM domain. The tract at residues 279–337 (QELEQQREEQKRREKEAEERQRAEERKQKELEELERERKREEKLRKREQKQRDRELRRN) is disordered. The interval 425-454 (LGLQRKERELRERLLSILLSKKPDDSHTHD) is PKA-RI-alpha subunit binding domain. Residues 482 to 695 (TTLHPLGGQP…PSRHRSTWNR (214 aa)) form a disordered region. Residue Ser537 is modified to Phosphoserine. Basic and acidic residues predominate over residues 567-585 (VSRKDTRSEQDKCNREPSK). Basic residues-rich tracts occupy residues 598-609 (RHKRERSRARRA) and 618-628 (RKERRPHKKHA). A compositionally biased stretch (basic and acidic residues) spans 629 to 644 (YKDDSPRRRSTSPDHT). Ser633 carries the post-translational modification Phosphoserine. 2 stretches are compositionally biased toward basic residues: residues 645-658 (RSRRSHSKDRHRRE) and 666-695 (SASRKHSRHRRRSERSRSRSPSRHRSTWNR).

In terms of assembly, monomer. Component of the spliceosome. Interacts with ZRANB2 and SFRS1/ASF through its Arg/Ser-rich domain. Interacts with RI and RII subunits of PKA. As to expression, widely expressed. Found in heart, brain, lung, liver, skeletal muscle, kidney and pancreas. Expressed in activated B-cells and placenta. Expressed in all cell lines tested including Jurkat-TAg, U-937 and HEK293 cells.

It localises to the nucleus speckle. In terms of biological role, splice factor regulating alternative splice site selection for certain mRNA precursors. Mediates regulation of pre-mRNA splicing in a PKA-dependent manner. The protein is A-kinase anchor protein 17A (AKAP17A) of Homo sapiens (Human).